Consider the following 353-residue polypeptide: UDP-N-acetylglucosamine--N-acetylmuramyl-(pentapeptide) pyrophosphoryl-undecaprenol N-acetylglucosamine transferase (353 aa).

Residues 10 to 12 (TGG), Asn124, Ser183, and Gln283 each bind UDP-N-acetyl-alpha-D-glucosamine.

The protein belongs to the glycosyltransferase 28 family. MurG subfamily.

Its subcellular location is the cell inner membrane. It carries out the reaction di-trans,octa-cis-undecaprenyl diphospho-N-acetyl-alpha-D-muramoyl-L-alanyl-D-glutamyl-meso-2,6-diaminopimeloyl-D-alanyl-D-alanine + UDP-N-acetyl-alpha-D-glucosamine = di-trans,octa-cis-undecaprenyl diphospho-[N-acetyl-alpha-D-glucosaminyl-(1-&gt;4)]-N-acetyl-alpha-D-muramoyl-L-alanyl-D-glutamyl-meso-2,6-diaminopimeloyl-D-alanyl-D-alanine + UDP + H(+). It participates in cell wall biogenesis; peptidoglycan biosynthesis. In terms of biological role, cell wall formation. Catalyzes the transfer of a GlcNAc subunit on undecaprenyl-pyrophosphoryl-MurNAc-pentapeptide (lipid intermediate I) to form undecaprenyl-pyrophosphoryl-MurNAc-(pentapeptide)GlcNAc (lipid intermediate II). The polypeptide is UDP-N-acetylglucosamine--N-acetylmuramyl-(pentapeptide) pyrophosphoryl-undecaprenol N-acetylglucosamine transferase (Helicobacter acinonychis (strain Sheeba)).